Reading from the N-terminus, the 95-residue chain is Co-chaperonin GroES (95 aa).

Residues 36-55 (QEGEVVAVGSGKTLDDGSKV) are disordered.

The protein belongs to the GroES chaperonin family. As to quaternary structure, heptamer of 7 subunits arranged in a ring. Interacts with the chaperonin GroEL.

Its subcellular location is the cytoplasm. Its function is as follows. Together with the chaperonin GroEL, plays an essential role in assisting protein folding. The GroEL-GroES system forms a nano-cage that allows encapsulation of the non-native substrate proteins and provides a physical environment optimized to promote and accelerate protein folding. GroES binds to the apical surface of the GroEL ring, thereby capping the opening of the GroEL channel. The polypeptide is Co-chaperonin GroES (Natranaerobius thermophilus (strain ATCC BAA-1301 / DSM 18059 / JW/NM-WN-LF)).